A 426-amino-acid chain; its full sequence is MDRIKIRGGHRLKGRIPVSGAKNAVLALMPASLLTSDSLTLINLPRLADVDSCCHLLNELGVSTMVARSKGDHPGREITLTADTIASTVAPYDIVRKMRASILVLGPLLAREGEATVSLPGGCAIGNRPIDLHLRALEALGAEIELTAGYVRARAPDGGLRGGIISFPVVSVGATENAIMAAVLARGETVINNAAREPEIVDLCQCLMAMGAKIDGVGNSRLVIHGCDRLHGATHVVMPDRIEAGSYACAAAITGGDVLLQGARSADMAEVLVELKESGLNISVEEDGIRVQADAPLKGLTLSTAPFPGFPTDMQAQFMAMLALAQGTSVLTETIFENRYMHVPELVRMGADIQVKGRVAVVKGVSGLVGAEVMATDLRASMSLIIAALAAEGETQVHRVYHLDRGYERLEEKLSAVGADIERVGG.

22-23 provides a ligand contact to phosphoenolpyruvate; that stretch reads KN. Arg-99 is a binding site for UDP-N-acetyl-alpha-D-glucosamine. Residue Cys-123 is the Proton donor of the active site. Position 123 is a 2-(S-cysteinyl)pyruvic acid O-phosphothioketal (Cys-123). UDP-N-acetyl-alpha-D-glucosamine-binding positions include 128–132, Asp-313, and Ile-335; that span reads RPIDL.

The protein belongs to the EPSP synthase family. MurA subfamily.

Its subcellular location is the cytoplasm. It catalyses the reaction phosphoenolpyruvate + UDP-N-acetyl-alpha-D-glucosamine = UDP-N-acetyl-3-O-(1-carboxyvinyl)-alpha-D-glucosamine + phosphate. The protein operates within cell wall biogenesis; peptidoglycan biosynthesis. Its function is as follows. Cell wall formation. Adds enolpyruvyl to UDP-N-acetylglucosamine. This is UDP-N-acetylglucosamine 1-carboxyvinyltransferase from Zymomonas mobilis subsp. mobilis (strain ATCC 31821 / ZM4 / CP4).